Here is a 135-residue protein sequence, read N- to C-terminus: Large ribosomal subunit protein bL19 (135 aa).

The protein belongs to the bacterial ribosomal protein bL19 family.

This protein is located at the 30S-50S ribosomal subunit interface and may play a role in the structure and function of the aminoacyl-tRNA binding site. In Xanthomonas oryzae pv. oryzae (strain KACC10331 / KXO85), this protein is Large ribosomal subunit protein bL19.